The sequence spans 402 residues: MGGRRMPLWALLLLWTSCSFSLPTDTASFGRILLKKMPSVREILEERGVDMTRISAEWGEFIKKSSFTNVTSPVVLTNYLDTQYYGEIGIGTPSQTFKVIFDTGSANLWVPSTKCGPLYTACEIHNLYDSSESSSYMENGTEFTIHYGSGKVKGFLSQDVVTVGGIIVTQTFGEVTELPLIPFMLAKFDGVLGMGFPAQAVDGVIPVFDHILSQRVLKEEVFSVYYSRESHLLGGEVVLGGSDPQHYQGNFHYVSISKAGSWQITMKGVSVGPATLLCEEGCMAVVDTGTSYISGPTSSLQLIMQALGVKEKRANNYVVNCSQVPTLPDISFYLGGRTYTLSNMDYVQKNPFRNDDLCILALQGLDIPPPTGPVWVLGATFIRKFYTEFDRHNNRIGFALAR.

The signal sequence occupies residues 1–26; that stretch reads MGGRRMPLWALLLLWTSCSFSLPTDT. The propeptide at 27–64 is activation peptide; it reads ASFGRILLKKMPSVREILEERGVDMTRISAEWGEFIKK. A glycan (N-linked (GlcNAc...) asparagine) is linked at Asn-69. Residues 84–399 enclose the Peptidase A1 domain; the sequence is YYGEIGIGTP…DRHNNRIGFA (316 aa). Asp-102 is an active-site residue. A disulfide bond links Cys-115 and Cys-122. Asn-139 is a glycosylation site (N-linked (GlcNAc...) asparagine). A disulfide bond links Cys-278 and Cys-282. Residue Asp-287 is part of the active site. Asn-320 carries an N-linked (GlcNAc...) asparagine glycan. A disulfide bond links Cys-321 and Cys-358.

Belongs to the peptidase A1 family. Interacts with ATP6AP2.

The protein resides in the secreted. It localises to the membrane. The catalysed reaction is Cleavage of Leu-|-Xaa bond in angiotensinogen to generate angiotensin I.. Its activity is regulated as follows. Interaction with ATP6AP2 results in a 5-fold increased efficiency in angiotensinogen processing. Renin is a highly specific endopeptidase, whose only known function is to generate angiotensin I from angiotensinogen in the plasma, initiating a cascade of reactions that produce an elevation of blood pressure and increased sodium retention by the kidney. This chain is Renin (Ren1), found in Rattus norvegicus (Rat).